The primary structure comprises 469 residues: UDP-N-acetylmuramate--L-alanine ligase (469 aa).

An ATP-binding site is contributed by 122–128 (GTHGKTT).

Belongs to the MurCDEF family.

Its subcellular location is the cytoplasm. It carries out the reaction UDP-N-acetyl-alpha-D-muramate + L-alanine + ATP = UDP-N-acetyl-alpha-D-muramoyl-L-alanine + ADP + phosphate + H(+). The protein operates within cell wall biogenesis; peptidoglycan biosynthesis. Functionally, cell wall formation. This chain is UDP-N-acetylmuramate--L-alanine ligase, found in Legionella pneumophila (strain Lens).